A 591-amino-acid polypeptide reads, in one-letter code: Glutathione hydrolase (591 aa).

The N-terminal stretch at Met1–Pro41 is a signal peptide. Residue Arg122 coordinates L-glutamate. Asn135, Asn270, and Asn389 each carry an N-linked (GlcNAc...) asparagine glycan. Residue Thr393 is the Nucleophile of the active site. L-glutamate is bound by residues Thr411, Glu432, and Ser464–Ala465. Asn534 carries an N-linked (GlcNAc...) asparagine glycan.

It belongs to the gamma-glutamyltransferase family.

It carries out the reaction an N-terminal (5-L-glutamyl)-[peptide] + an alpha-amino acid = 5-L-glutamyl amino acid + an N-terminal L-alpha-aminoacyl-[peptide]. The enzyme catalyses glutathione + H2O = L-cysteinylglycine + L-glutamate. The catalysed reaction is an S-substituted glutathione + H2O = an S-substituted L-cysteinylglycine + L-glutamate. It participates in mycotoxin biosynthesis. Its function is as follows. Gamma-glutamyltransferase; part of the gene cluster that mediates the biosynthesis of the secondary metabolite ustiloxin B, an antimitotic tetrapeptide. First, ustA is processed by the subtilisin-like endoprotease Kex2 that is outside the ustiloxin B gene cluster, at the C-terminal side of Arg-Lys, after transfer to Golgi apparatus through the endoplasmic reticulum (ER). Cleavage by KEX2 generates 16 peptides YAIG-I to YAIG-XVI. To process the precursor peptide further, at least two peptidases are necessary to cleave the N-terminal and C-terminal sides of the Tyr-Ala-Ile-Gly core peptide which serves as backbone for the synthesis of ustiloxin B, through cyclization and modification of the tyrosine with a non-protein coding amino acid, norvaline. One of the two peptidases must be the serine peptidase ustP; and the other pepdidase is probably ustH. Macrocyclization of the core peptide derived from ustA requires the tyrosinase ustQ, as well as the homologous oxidases ustYa and ustYb, and leads to the production of the first cyclization product N-desmethylustiloxin F. For the formation of N-desmethylustiloxin F, three oxidation steps are required, hydroxylation at the benzylic position, hydroxylation at either the aromatic ring of Tyr or beta-position of Ile, and oxidative cyclization. UstQ may catalyze the oxidation of a phenol moiety, whereas the ustYa and ustYb are most likely responsible for the remaining two-step oxidations. N-desmethylustiloxin F is then methylated by ustM to yield ustiloxin F which in turn substrate of the cytochrome P450 monooxygenase ustC which catalyzes the formation of S-deoxyustiloxin H. The flavoprotein monooxygenases ustF1 and ustF2 then participate in the modification of the side chain of S-deoxyustiloxin H, leading to the synthesis of an oxime intermediate, via ustiloxin H. Finally, carboxylative dehydration performed by the cysteine desulfurase-like protein ustD yields ustiloxin B. This Aspergillus flavus (strain ATCC 200026 / FGSC A1120 / IAM 13836 / NRRL 3357 / JCM 12722 / SRRC 167) protein is Glutathione hydrolase.